The following is a 702-amino-acid chain: Ribosomal RNA large subunit methyltransferase K/L (702 aa).

The THUMP domain maps to 43 to 154 (LVYQSLMWSR…KETASIALDL (112 aa)).

It belongs to the methyltransferase superfamily. RlmKL family.

It localises to the cytoplasm. It carries out the reaction guanosine(2445) in 23S rRNA + S-adenosyl-L-methionine = N(2)-methylguanosine(2445) in 23S rRNA + S-adenosyl-L-homocysteine + H(+). The enzyme catalyses guanosine(2069) in 23S rRNA + S-adenosyl-L-methionine = N(2)-methylguanosine(2069) in 23S rRNA + S-adenosyl-L-homocysteine + H(+). In terms of biological role, specifically methylates the guanine in position 2445 (m2G2445) and the guanine in position 2069 (m7G2069) of 23S rRNA. The sequence is that of Ribosomal RNA large subunit methyltransferase K/L from Shigella flexneri serotype 5b (strain 8401).